An 88-amino-acid chain; its full sequence is Large ribosomal subunit protein bL31B (88 aa).

It belongs to the bacterial ribosomal protein bL31 family. Type B subfamily. Part of the 50S ribosomal subunit.

The polypeptide is Large ribosomal subunit protein bL31B (Pasteurella multocida (strain Pm70)).